We begin with the raw amino-acid sequence, 260 residues long: Small ribosomal subunit protein uS2 (260 aa).

Residues 228–240 are compositionally biased toward basic and acidic residues; that stretch reads RKETKAENAEEAM. The disordered stretch occupies residues 228 to 260; sequence RKETKAENAEEAMKQAAEAEAEAAAPAAEESAE. Residues 241 to 260 are compositionally biased toward low complexity; it reads KQAAEAEAEAAAPAAEESAE.

This sequence belongs to the universal ribosomal protein uS2 family.

This is Small ribosomal subunit protein uS2 from Oleidesulfovibrio alaskensis (strain ATCC BAA-1058 / DSM 17464 / G20) (Desulfovibrio alaskensis).